The following is a 163-amino-acid chain: Deoxyuridine 5'-triphosphate nucleotidohydrolase (163 aa).

Belongs to the dUTPase family. Mg(2+) is required as a cofactor.

It catalyses the reaction dUTP + H2O = dUMP + diphosphate + H(+). It participates in pyrimidine metabolism; dUMP biosynthesis; dUMP from dCTP (dUTP route): step 2/2. This enzyme is involved in nucleotide metabolism: it produces dUMP, the immediate precursor of thymidine nucleotides and it decreases the intracellular concentration of dUTP so that uracil cannot be incorporated into DNA. In Galliformes (FAdV-8), this protein is Deoxyuridine 5'-triphosphate nucleotidohydrolase.